A 783-amino-acid chain; its full sequence is FYN-binding protein 1 (783 aa).

Composition is skewed to polar residues over residues 1–18 (MAKY…SVNS) and 25–45 (GPNS…QGNA). The disordered stretch occupies residues 1 to 502 (MAKYNTGGNP…KEKKEQEIKK (502 aa)). K3 carries the post-translational modification N6-acetyllysine. Phosphoserine is present on residues S28 and S46. A compositionally biased stretch (basic and acidic residues) spans 69-79 (SSEEKPDKEPK). Position 225 is a phosphoserine (S225). Composition is skewed to basic and acidic residues over residues 240-252 (PARE…DHAG) and 278-290 (NGEE…KIDA). At S329 the chain carries Phosphoserine. Residues 345-363 (KPLPPLFTLGPPPPKPNRP) show a composition bias toward pro residues. The segment at 348–448 (PPLFTLGPPP…QDGVTHSDGA (101 aa)) is interaction with SKAP1. The segment covering 374-387 (TSSGNSTSKGQTSY) has biased composition (polar residues). A compositionally biased stretch (pro residues) spans 392-424 (LPPPPPSHPASQPPLPASHPSQPPVPSLPPRNI). The segment covering 451-465 (LDEEQDSEGETYEDI) has biased composition (acidic residues). A coiled-coil region spans residues 456-507 (DSEGETYEDIEASKEREKKREKEEKKRLELEKKEQKEKEKKEQEIKKKFKLT). S457 is modified (phosphoserine). An SH2-binding motif is present at residues 462 to 465 (YEDI). The segment covering 466–501 (EASKEREKKREKEEKKRLELEKKEQKEKEKKEQEIK) has biased composition (basic and acidic residues). Positions 469 to 505 (KEREKKREKEEKKRLELEKKEQKEKEKKEQEIKKKFK) match the Nuclear localization signal motif. The SH3 1 domain occupies 511-572 (QVIHLAKACC…KTTAVEIDYD (62 aa)). Y571 bears the Phosphotyrosine mark. 2 positions are modified to phosphoserine: S573 and S580. An SH2-binding; to LCP2 motif is present at residues 595–598 (YDDV). The segment at 598–678 (VAEQDDISSH…GTNVGKAKTE (81 aa)) is disordered. Composition is skewed to acidic residues over residues 620 to 635 (PDDD…DADD) and 646 to 656 (MGDEVYDDVDT). Positions 625–628 (YDGI) match the SH2-binding; to FYN motif. The residue at position 651 (Y651) is a Phosphotyrosine. A Nuclear localization signal motif is present at residues 674 to 700 (KAKTEEKDLKKLKKQEKEEKDFRKKFK). One can recognise an SH3 2 domain in the interval 700–768 (KYDGEIRVLY…LRSYLADNDG (69 aa)).

In terms of assembly, part of a complex consisting of SKAP2, FYB1 and PTPNS1. Part of a complex consisting of SKAP2, FYB1 and LILRB3. Part of a complex consisting of SKAP1, FYB1 and CLNK. Interacts with CLNK (via its SH2 domain); this interaction allows SKAP1 and FYB1 to recruit FYN to the complex, thus promoting the phosphorylation of CLNK by FYN. Interacts with FYN. Interacts with LCP2. Interacts with SKAP1. Interacts with SKAP2. Interacts with FASLG. Interacts with EVL. Interacts with TMEM47. Interacts with LCK. In terms of processing, T-cell receptor ligation leads to increased tyrosine phosphorylation. Expressed in hematopoietic tissues such as myeloid and T-cells, spleen and thymus. Not expressed in B-cells, nor in non-lymphoid tissues.

Its subcellular location is the cytoplasm. The protein resides in the nucleus. It localises to the cell junction. In terms of biological role, acts as an adapter protein of the FYN and LCP2 signaling cascades in T-cells. May play a role in linking T-cell signaling to remodeling of the actin cytoskeleton. Modulates the expression of IL2. Involved in platelet activation. Prevents the degradation of SKAP1 and SKAP2. May be involved in high affinity immunoglobulin epsilon receptor signaling in mast cells. The sequence is that of FYN-binding protein 1 from Homo sapiens (Human).